We begin with the raw amino-acid sequence, 213 residues long: Imidazole glycerol phosphate synthase subunit HisH (213 aa).

Positions 8–213 (TVALIDYGAG…FLSRFLDWNP (206 aa)) constitute a Glutamine amidotransferase type-1 domain. The Nucleophile role is filled by C91. Active-site residues include H193 and E195.

Heterodimer of HisH and HisF.

Its subcellular location is the cytoplasm. It catalyses the reaction 5-[(5-phospho-1-deoxy-D-ribulos-1-ylimino)methylamino]-1-(5-phospho-beta-D-ribosyl)imidazole-4-carboxamide + L-glutamine = D-erythro-1-(imidazol-4-yl)glycerol 3-phosphate + 5-amino-1-(5-phospho-beta-D-ribosyl)imidazole-4-carboxamide + L-glutamate + H(+). It carries out the reaction L-glutamine + H2O = L-glutamate + NH4(+). The protein operates within amino-acid biosynthesis; L-histidine biosynthesis; L-histidine from 5-phospho-alpha-D-ribose 1-diphosphate: step 5/9. In terms of biological role, IGPS catalyzes the conversion of PRFAR and glutamine to IGP, AICAR and glutamate. The HisH subunit catalyzes the hydrolysis of glutamine to glutamate and ammonia as part of the synthesis of IGP and AICAR. The resulting ammonia molecule is channeled to the active site of HisF. In Zymomonas mobilis subsp. mobilis (strain ATCC 31821 / ZM4 / CP4), this protein is Imidazole glycerol phosphate synthase subunit HisH.